Here is a 276-residue protein sequence, read N- to C-terminus: Short-chain dehydrogenase/reductase ATR10 (276 aa).

Residues I29, S51, D78, and N105 each contribute to the NADP(+) site. S161 acts as the Proton donor in catalysis. Positions 185 and 214 each coordinate NADP(+). K185 (lowers pKa of active site Tyr) is an active-site residue.

The protein belongs to the short-chain dehydrogenases/reductases (SDR) family.

The protein operates within mycotoxin biosynthesis. Short-chain dehydrogenase/reductase; part of the core atranone cluster (CAC) which products are predicted to catalyze most or all steps of mycotoxin atranone synthesis, starting from geranylgeranyl pyrophosphate (GGPP). The initial cyclization of GGPP to dolabellane is probably performed by the terpene cyclase ATR13. The Baeyer-Villiger oxidation near the end of the atranone synthesis, which converts atranones D and E to atranones F and G is predicted to be catalyzed by the monooxygenase ATR8. Of the CAC's other predicted gene products, the reducing PKS ATR6 might synthesize a polyketide chain. This polyketide is probably transferred onto the atranone backbone by the polyketide transferase ATR5. Other predicted CAC products include 4 oxygenases (ATR2, ATR3, ATR4, and ATR14), 3 short-chain reductases (ATR7, ATR9, and ATR10), and a methyltransferase (ATR12). These may all be involved in the various steps of atranone biosynthesis, although their specific roles must await experimental determination. The chain is Short-chain dehydrogenase/reductase ATR10 from Stachybotrys chlorohalonatus (strain IBT 40285).